We begin with the raw amino-acid sequence, 325 residues long: Pyruvate dehydrogenase E1 component subunit beta (325 aa).

E59 is a binding site for thiamine diphosphate.

As to quaternary structure, heterodimer of an alpha and a beta chain. It depends on thiamine diphosphate as a cofactor.

It catalyses the reaction N(6)-[(R)-lipoyl]-L-lysyl-[protein] + pyruvate + H(+) = N(6)-[(R)-S(8)-acetyldihydrolipoyl]-L-lysyl-[protein] + CO2. Its function is as follows. The pyruvate dehydrogenase complex catalyzes the overall conversion of pyruvate to acetyl-CoA and CO(2). It contains multiple copies of three enzymatic components: pyruvate dehydrogenase (E1), dihydrolipoamide acetyltransferase (E2) and lipoamide dehydrogenase (E3). This chain is Pyruvate dehydrogenase E1 component subunit beta (pdhB), found in Rickettsia bellii (strain RML369-C).